An 865-amino-acid polypeptide reads, in one-letter code: Taste receptor type 1 member 3 (865 aa).

An N-terminal signal peptide occupies residues 1–24 (MPGLALLGLTALLGLTALLDHGEG). Over 25-573 (ATSCLSQQLR…FLAWGEPAVL (549 aa)) the chain is Extracellular. Residues Asn-134 and Asn-267 are each glycosylated (N-linked (GlcNAc...) asparagine). The chain crosses the membrane as a helical span at residues 574-594 (LLLALLALALGLALAALGLFL). Topologically, residues 595 to 606 (WHSDSPLVQASG) are cytoplasmic. A helical membrane pass occupies residues 607 to 627 (GPRACFGLACLGLVCLSVLLF). At 628–642 (PGQPGPASCLAQQPL) the chain is on the extracellular side. Residues 643 to 663 (FHLPLTGCLSTFFLQAAEIFV) traverse the membrane as a helical segment. Residues 664 to 685 (GSELPPSWAEKMRGRLRGPWAW) lie on the Cytoplasmic side of the membrane. Residues 686-706 (LVVLLAMLAEAALCAWYLVAF) form a helical membrane-spanning segment. At 707 to 732 (PPEVVTDWRVLPTEALVHCHVHSWIS) the chain is on the extracellular side. Residues 733 to 753 (FGLVHATNAMLAFLCFLGTFL) traverse the membrane as a helical segment. Residues 754-765 (VQSRPGRYNGAR) are Cytoplasmic-facing. Residues 766 to 786 (GLTFAMLAYFITWISFVPLFA) traverse the membrane as a helical segment. Residues 787-794 (NVHVAYQP) are Extracellular-facing. Residues 795 to 815 (AVQMGTILLCALGILATFHLP) traverse the membrane as a helical segment. The Cytoplasmic segment spans residues 816 to 865 (KCYLLLQRPELNTPEFFLEDNARAQGSSWGQGRGESGQKQVTPDPVTSPQ). The segment at 840-865 (QGSSWGQGRGESGQKQVTPDPVTSPQ) is disordered. Over residues 852 to 865 (GQKQVTPDPVTSPQ) the composition is skewed to polar residues.

Belongs to the G-protein coupled receptor 3 family. TAS1R subfamily. Forms homodimers or a heterodimer with TAS1R1. Expressed in taste buds.

It localises to the cell membrane. Its function is as follows. Putative taste receptor. TAS1R1/TAS1R3 responds to the umami taste stimulus (the taste of monosodium glutamate). The chain is Taste receptor type 1 member 3 (TAS1R3) from Felis catus (Cat).